The following is a 269-amino-acid chain: Putative hydro-lyase Aave_3512 (269 aa).

The protein belongs to the D-glutamate cyclase family.

The protein is Putative hydro-lyase Aave_3512 of Paracidovorax citrulli (strain AAC00-1) (Acidovorax citrulli).